Here is a 308-residue protein sequence, read N- to C-terminus: Porphobilinogen deaminase (308 aa).

An S-(dipyrrolylmethanemethyl)cysteine modification is found at Cys241.

The protein belongs to the HMBS family. Monomer. Requires dipyrromethane as cofactor.

The catalysed reaction is 4 porphobilinogen + H2O = hydroxymethylbilane + 4 NH4(+). It functions in the pathway porphyrin-containing compound metabolism; protoporphyrin-IX biosynthesis; coproporphyrinogen-III from 5-aminolevulinate: step 2/4. Its function is as follows. Tetrapolymerization of the monopyrrole PBG into the hydroxymethylbilane pre-uroporphyrinogen in several discrete steps. This chain is Porphobilinogen deaminase, found in Staphylococcus saprophyticus subsp. saprophyticus (strain ATCC 15305 / DSM 20229 / NCIMB 8711 / NCTC 7292 / S-41).